We begin with the raw amino-acid sequence, 227 residues long: UPF0173 metal-dependent hydrolase BT9727_4343 (227 aa).

It belongs to the UPF0173 family.

This Bacillus thuringiensis subsp. konkukian (strain 97-27) protein is UPF0173 metal-dependent hydrolase BT9727_4343.